Here is a 356-residue protein sequence, read N- to C-terminus: RuBisCO accumulation factor 1 (356 aa).

The interval 7-185 is N-terminal alpha-helix; it reads ALTTEVLQRL…RQALEKLLTD (179 aa). A C-terminal beta-sheet region spans residues 209–342; it reads PYLVPVAGTA…LLLVLRPPQV (134 aa).

Belongs to the RAF family. Homodimer. Forms an RbcL(8)-Raf1(8) complex. Forms complexes of many stoichiometries with RbcL with and without RbcS. RbcX and Raf1 can bind simultaneously to RbcL.

Its subcellular location is the cytoplasm. Its function is as follows. A major RuBisCO chaperone. Acts after GroEL-GroES chaperonin to fold and/or assemble the large subunit of RuBisCO (ccbL, rbcL). Cooperates with RbcX in RbcL folding, plays the major role in assembly of dimers into RbcL(8)-Raf1(8) intermediate complexes. RbcS replaces Raf1, leading to holoenzyme formation. In terms of biological role, required for optimal reconstitution of RuBisCO upon expression of rbcL-rbcS subunits in E.coli. Only interacts with the large subunit (cbbL, rbcL). Probably acts in the final stages of RuBisCO assembly, possibly participating in the addition of the small subunit (ccbS, rbcS). This Thermosynechococcus vestitus (strain NIES-2133 / IAM M-273 / BP-1) protein is RuBisCO accumulation factor 1.